The primary structure comprises 551 residues: Terpene synthase 10 (551 aa).

Mg(2+) is bound by residues Asp303, Asp307, and Glu455. The short motif at Asp303 to Asp307 is the DDXXD motif element.

The protein belongs to the terpene synthase family. Requires Mg(2+) as cofactor.

Functionally, catalyzes the cyclization of farnesyl diphosphate to sesquiterpene olefins. This chain is Terpene synthase 10 (TPS10), found in Ricinus communis (Castor bean).